The sequence spans 185 residues: Alcohol dehydrogenase 1 (185 aa).

NAD(+) is bound by residues 10–15, Asp-34, Lys-39, 103–105, and Arg-180; these read GLGGVG and VGV.

Belongs to the zinc-containing alcohol dehydrogenase family. Class-I subfamily. As to quaternary structure, homodimer. Zn(2+) serves as cofactor.

It is found in the cytoplasm. It carries out the reaction a primary alcohol + NAD(+) = an aldehyde + NADH + H(+). The catalysed reaction is a secondary alcohol + NAD(+) = a ketone + NADH + H(+). In Anas platyrhynchos (Mallard), this protein is Alcohol dehydrogenase 1 (ADH1).